A 91-amino-acid polypeptide reads, in one-letter code: Small ribosomal subunit protein bS16 (91 aa).

This sequence belongs to the bacterial ribosomal protein bS16 family.

The polypeptide is Small ribosomal subunit protein bS16 (Exiguobacterium sibiricum (strain DSM 17290 / CCUG 55495 / CIP 109462 / JCM 13490 / 255-15)).